A 1537-amino-acid chain; its full sequence is DNA (cytosine-5)-methyltransferase 1 (1537 aa).

Over residues 1-13 (MPARSAPPPPALP) the composition is skewed to pro residues. Disordered stretches follow at residues 1–34 (MPAR…SEKE) and 97–232 (RASN…DEKR). Positions 8–105 (PPPALPPALR…SRASNGCAGN (98 aa)) constitute a DMAP1-binding domain. The span at 21–34 (RDLERDEDSLSEKE) shows a compositional bias: basic and acidic residues. The segment covering 129–154 (SSSSSSSSSSSSSSSSSSSSSLLPAP) has biased composition (low complexity). Residues 171–194 (SPASSRVTRSSGRQPTILSVFSKG) show a composition bias toward polar residues. Residues 182–194 (GRQPTILSVFSKG) are interaction with PCNA. Residues 215–227 (KDEEEEEELEEKE) are compositionally biased toward acidic residues. Residues C263, C266, and H329 each contribute to the Zn(2+) site. S420 is subject to Phosphoserine. A CXXC-type zinc finger spans residues 558–604 (NAMKRRRCGVCEVCQQPECGKCKACQNMVKFGGSGRSKQACLQRRCP). Zn(2+) contacts are provided by C565, C568, C571, C576, C579, C582, C598, and C603. A disordered region spans residues 614-638 (DEEVDDNIPEMPSPKKMLQGRKKKQ). BAH domains follow at residues 667 to 791 (ETLE…ETPP) and 883 to 1011 (HYRK…EDPP). Positions 1006 to 1050 (SFEDPPNHARSSGNKGKGKGKGKGKGKGKSSTTCEQSEPEPTELK) are disordered. Tandem repeats lie at residues 1020 to 1021 (KG), 1022 to 1023 (KG), 1024 to 1025 (KG), 1026 to 1027 (KG), 1028 to 1029 (KG), 1030 to 1031 (KG), and 1032 to 1033 (KG). Residues 1020–1035 (KGKGKGKGKGKGKGKS) are 8 X 2 AA tandem repeats of K-G. Residues 1021–1033 (GKGKGKGKGKGKG) show a composition bias toward basic residues. One copy of the 8; approximate repeat lies at 1034 to 1035 (KS). Positions 1054-1513 (LRTLDVFSGC…LEIRACVGAR (460 aa)) constitute an SAM-dependent MTase C5-type domain. Residues S1061, 1065–1066 (GL), 1083–1084 (EM), 1105–1106 (DC), and C1106 contribute to the S-adenosyl-L-methionine site. C1141 is an active-site residue. 2 residues coordinate S-adenosyl-L-methionine: N1492 and V1494. Residues 1518-1537 (SGAAVAPPAPEKMEMTAAAD) are disordered.

It belongs to the class I-like SAM-binding methyltransferase superfamily. C5-methyltransferase family. As to quaternary structure, homodimer. Interacts with PCNA. As to expression, testis and lung.

The protein localises to the nucleus. It catalyses the reaction a 2'-deoxycytidine in DNA + S-adenosyl-L-methionine = a 5-methyl-2'-deoxycytidine in DNA + S-adenosyl-L-homocysteine + H(+). In terms of biological role, methylates CpG residues. Preferentially methylates hemimethylated DNA. It is responsible for maintaining methylation patterns established in development. Mediates transcriptional repression by direct binding to HDAC2. Plays a role in promoter hypermethylation and transcriptional silencing of tumor suppressor genes (TSGs) or other tumor-related genes. Also required to maintain a transcriptionally repressive state of genes in undifferentiated embryonic stem cells (ESCs). Associates at promoter regions of tumor suppressor genes (TSGs) leading to their gene silencing. The polypeptide is DNA (cytosine-5)-methyltransferase 1 (DNMT1) (Gallus gallus (Chicken)).